We begin with the raw amino-acid sequence, 108 residues long: UPF0145 protein Tery_3795 (108 aa).

This sequence belongs to the UPF0145 family.

The polypeptide is UPF0145 protein Tery_3795 (Trichodesmium erythraeum (strain IMS101)).